We begin with the raw amino-acid sequence, 603 residues long: Aspartate--tRNA(Asp/Asn) ligase (603 aa).

E182 provides a ligand contact to L-aspartate. The segment at 206–209 (QLFK) is aspartate. R228 serves as a coordination point for L-aspartate. Residues 228 to 230 (RDE) and Q237 contribute to the ATP site. H454 lines the L-aspartate pocket. Residue E500 coordinates ATP. Residue R507 participates in L-aspartate binding. Position 552-555 (552-555 (GLDR)) interacts with ATP.

This sequence belongs to the class-II aminoacyl-tRNA synthetase family. Type 1 subfamily. Homodimer.

It is found in the cytoplasm. It carries out the reaction tRNA(Asx) + L-aspartate + ATP = L-aspartyl-tRNA(Asx) + AMP + diphosphate. In terms of biological role, aspartyl-tRNA synthetase with relaxed tRNA specificity since it is able to aspartylate not only its cognate tRNA(Asp) but also tRNA(Asn). Reaction proceeds in two steps: L-aspartate is first activated by ATP to form Asp-AMP and then transferred to the acceptor end of tRNA(Asp/Asn). The chain is Aspartate--tRNA(Asp/Asn) ligase from Aquifex aeolicus (strain VF5).